We begin with the raw amino-acid sequence, 611 residues long: Chaperone protein DnaK (611 aa).

Phosphothreonine; by autocatalysis is present on threonine 173. The segment covering 577-592 has biased composition (low complexity); it reads QAAAGQAEGAQGAQDA. Positions 577–611 are disordered; that stretch reads QAAAGQAEGAQGAQDAGTKKDNVVDAEFEEVKEDK. The span at 600 to 611 shows a compositional bias: acidic residues; the sequence is VDAEFEEVKEDK.

This sequence belongs to the heat shock protein 70 family.

Acts as a chaperone. This is Chaperone protein DnaK from Bacillus cereus (strain G9842).